A 224-amino-acid polypeptide reads, in one-letter code: Glutathione S-transferase Mu 5 (224 aa).

The GST N-terminal domain maps to 4 to 91; sequence KSMVLGYWDI…YIARKHNMCG (88 aa). Position 5 is a phosphoserine (Ser5). Residues 10–11, 49–53, 62–63, and 75–76 each bind glutathione; these read YW, WLDVK, NL, and QS. The 119-residue stretch at 93–211 folds into the GST C-terminal domain; sequence TEEEKIRVDI…QSDRFFKMPI (119 aa). Substrate is bound at residue Tyr119.

The protein belongs to the GST superfamily. Mu family. In terms of assembly, homodimer. Interacts with PFKM isoform 2 and isoform 3 (via N-terminal testis-specific region).

It is found in the cytoplasm. It catalyses the reaction RX + glutathione = an S-substituted glutathione + a halide anion + H(+). Its function is as follows. Conjugation of reduced glutathione to a wide number of exogenous and endogenous hydrophobic electrophiles. In Mus musculus (Mouse), this protein is Glutathione S-transferase Mu 5 (Gstm5).